The sequence spans 129 residues: Small ribosomal subunit protein uS8 (129 aa).

This sequence belongs to the universal ribosomal protein uS8 family. As to quaternary structure, part of the 30S ribosomal subunit.

One of the primary rRNA binding proteins, it binds directly to 16S rRNA central domain where it helps coordinate assembly of the platform of the 30S subunit. The chain is Small ribosomal subunit protein uS8 from Thermoplasma volcanium (strain ATCC 51530 / DSM 4299 / JCM 9571 / NBRC 15438 / GSS1).